Here is a 158-residue protein sequence, read N- to C-terminus: Large ribosomal subunit protein uL11 (158 aa).

It belongs to the universal ribosomal protein uL11 family. In terms of assembly, part of the ribosomal stalk of the 50S ribosomal subunit. Interacts with L10 and the large rRNA to form the base of the stalk. L10 forms an elongated spine to which L12 dimers bind in a sequential fashion forming a multimeric L10(L12)X complex.

Its function is as follows. Forms part of the ribosomal stalk which helps the ribosome interact with GTP-bound translation factors. In Methanosphaerula palustris (strain ATCC BAA-1556 / DSM 19958 / E1-9c), this protein is Large ribosomal subunit protein uL11.